The following is a 1196-amino-acid chain: FIP1[V]-like protein (1196 aa).

5 disordered regions span residues 1 to 102, 117 to 248, 268 to 300, 413 to 472, and 485 to 1174; these read MEED…TIPG, GVSQ…SHGY, GAAS…WRPL, GAQG…PRMR, and SHED…IEGP. A compositionally biased stretch (pro residues) spans 18 to 31; the sequence is FQPPVVLPPPPPLP. A compositionally biased stretch (polar residues) spans 117 to 126; sequence GVSQVTTRIE. The span at 129-141 shows a compositional bias: gly residues; it reads VGGGGDGGYGGQG. 2 stretches are compositionally biased toward acidic residues: residues 142–154 and 179–190; these read EGDD…EDDL and NEDDDDEDDEDP. Positions 226–236 are enriched in gly residues; that stretch reads AGKGSGPGGAT. A compositionally biased stretch (low complexity) spans 268 to 278; it reads GAASVGGPSSG. The segment covering 518–548 has biased composition (basic and acidic residues); sequence KRPDTESAEHSPAQDEPHKNLLKKQDDEISR. Over residues 549–561 the composition is skewed to polar residues; that stretch reads STDSGQSFRSSSP. Basic and acidic residues-rich tracts occupy residues 565–592 and 608–641; these read RGTR…EELK and GESK…DKHS. Positions 643–657 are enriched in polar residues; it reads RPANNRKQYDNNAPH. 5 stretches are compositionally biased toward basic and acidic residues: residues 661–673, 699–802, 810–918, 925–945, and 953–971; these read KNQD…ERTR, SRED…EKNE, SMSR…DTLR, RRDY…DFSA, and NEKK…KFID. Short sequence motifs (nuclear localization signal) lie at residues 704 to 711 and 734 to 741; these read DKRKERDV and RKRDREDD. Residues 998–1021 are compositionally biased toward polar residues; it reads ESLSKQGEQNGSSVVTGSKGTNDA. Basic and acidic residues-rich tracts occupy residues 1046-1071, 1103-1137, and 1151-1163; these read DEIH…EDAV, KSRD…TVEK, and TEKD…KMES.

It belongs to the FIP1 family. As to quaternary structure, component of the cleavage and polyadenylation specificity factor (CPSF) complex. Forms a complex with cleavage and polyadenylation specificity factor (CPSF) subunits CFIS1, CFIS2, CPSF30, CSTF50, CSTF64, CSTF77, FIPS3, PABN1, PABN2, PABN3, PAPS4, CFIM25 and PABN1. Binds RNA. As to expression, expressed in leaves, stems, flower tissues and roots.

It localises to the nucleus. Its function is as follows. Essential gene. Component of the cleavage and polyadenylation specificity factor (CPSF) complex that plays a key role in pre-mRNA 3'-end formation, recognizing the AAUAAA signal sequence and interacting with poly(A) polymerase and other factors to bring about cleavage and poly(A) addition. FIP1L1 contributes to poly(A) site recognition and stimulates poly(A) addition. Binds to U-rich RNA sequence elements surrounding the poly(A) site. May act to tether poly(A) polymerase to the CPSF complex. In Arabidopsis thaliana (Mouse-ear cress), this protein is FIP1[V]-like protein.